The sequence spans 1279 residues: ATP-dependent helicase/nuclease subunit A (1279 aa).

The UvrD-like helicase ATP-binding domain occupies 4–499; that stretch reads TKWTDEQRQA…VKLFKNFRSR (496 aa). Residue 25–32 coordinates ATP; it reads AGAGAGKT. The UvrD-like helicase C-terminal domain occupies 526-853; it reads EEALKVGASY…RIMSIHKSKG (328 aa).

The protein belongs to the helicase family. AddA subfamily. In terms of assembly, heterodimer of AddA and AddB/RexB. The cofactor is Mg(2+).

The enzyme catalyses Couples ATP hydrolysis with the unwinding of duplex DNA by translocating in the 3'-5' direction.. The catalysed reaction is ATP + H2O = ADP + phosphate + H(+). The heterodimer acts as both an ATP-dependent DNA helicase and an ATP-dependent, dual-direction single-stranded exonuclease. Recognizes the chi site generating a DNA molecule suitable for the initiation of homologous recombination. The AddA nuclease domain is required for chi fragment generation; this subunit has the helicase and 3' -&gt; 5' nuclease activities. This is ATP-dependent helicase/nuclease subunit A from Clostridium botulinum (strain Langeland / NCTC 10281 / Type F).